A 224-amino-acid chain; its full sequence is Large ribosomal subunit protein uL1m (224 aa).

It belongs to the universal ribosomal protein uL1 family.

Its subcellular location is the mitochondrion. In Reclinomonas americana, this protein is Large ribosomal subunit protein uL1m (RPL1).